The sequence spans 1139 residues: Sterol regulatory element-binding protein 2 (1139 aa).

Positions 1 to 50 (MDESSELGGLETMDTLTELGDELTLGDIDEMLQFVSNQVGEFPDLFSEQL) are transcriptional activation (acidic). The Cytoplasmic portion of the chain corresponds to 1 to 479 (MDESSELGGL…VALGMVDRSR (479 aa)). Disordered stretches follow at residues 48 to 104 (EQLC…SPST) and 119 to 143 (TPPR…SAQL). The segment covering 61 to 77 (GSSSSSNSSSSSGSNSR) has biased composition (low complexity). Positions 90–104 (RSFSQVPLPTFSPST) are enriched in polar residues. Residues 119-138 (TPPRATPVLQPRPQPQPQPQ) show a composition bias toward pro residues. The tract at residues 235-489 (QQVPVLVQPQ…ILLCVLTFLG (255 aa)) is interaction with LMNA. The bHLH domain occupies 328–378 (ERRTTHNIIEKRYRSSINDKIIELKDLVMGTDAKMHKSGVLRKAIDYIKYL). The segment at 378–399 (LQQVNHKLRQENMVLKLANQKN) is leucine-zipper. A Glycyl lysine isopeptide (Lys-Gly) (interchain with G-Cter in SUMO2) cross-link involves residue lysine 462. Residues 480–500 (ILLCVLTFLGLSFSPLTSLLQ) traverse the membrane as a helical segment. Topologically, residues 501 to 531 (WGGAHDTDQHPYSGSGRSVLSLESGSGGWFD) are lumenal. A helical transmembrane segment spans residues 532–552 (WMMPTLLLWLVNGVIVLSVFV). Over 553–1139 (KLLVHGEPVI…LGGGTAIAAS (587 aa)) the chain is Cytoplasmic. Phosphoserine is present on serine 1096.

The protein belongs to the SREBP family. As to quaternary structure, homodimer; efficient DNA binding of the soluble transcription factor fragment requires dimerization with another bHLH protein. Interacts with LMNA. Forms a tight complex with SCAP, the SCAP-SREBP complex, in the endoplasmic reticulum membrane and the Golgi apparatus. Interacts with PAQR3; the interaction anchors the SCAP-SREBP complex to the Golgi apparatus in low cholesterol conditions. Interacts (via C-terminal domain) with RNF139. In terms of processing, processed in the Golgi apparatus, releasing the protein from the membrane. At low cholesterol the SCAP-SREBP complex is recruited into COPII vesicles for export from the endoplasmic reticulum. In the Golgi, complex SREBPs are cleaved sequentially by site-1 (MBTPS1, S1P) and site-2 (MBTPS2, S2P) proteases. The first cleavage by site-1 protease occurs within the luminal loop, the second cleavage by site-2 protease occurs within the first transmembrane domain, releasing the transcription factor from the Golgi membrane. Apoptosis triggers cleavage by the cysteine proteases caspase-3 and caspase-7. Cleavage and activation is induced by mediated cholesterol efflux. Phosphorylated by AMPK, leading to suppress protein processing and nuclear translocation, and repress target gene expression. Post-translationally, SCAP-free SREBF2 is ubiquitinated by the BCR(ARMC5) complex, leading to its degradation. In terms of processing, ubiquitinated; the nuclear form has a rapid turnover and is rapidly ubiquitinated and degraded by the proteasome in the nucleus.

It localises to the endoplasmic reticulum membrane. It is found in the golgi apparatus membrane. The protein resides in the cytoplasmic vesicle. Its subcellular location is the COPII-coated vesicle membrane. The protein localises to the nucleus. Activation by cleavage is down-regulated upon activation of SIRT3-dependent PRKAA1/AMPK-alpha signaling cascade which leads to inhibition of ATP-consuming lipogenesis to restore cellular energy balance. Functionally, precursor of the transcription factor form (Processed sterol regulatory element-binding protein 2), which is embedded in the endoplasmic reticulum membrane. Low sterol concentrations promote processing of this form, releasing the transcription factor form that translocates into the nucleus and activates transcription of genes involved in cholesterol biosynthesis. In terms of biological role, key transcription factor that regulates expression of genes involved in cholesterol biosynthesis. Binds to the sterol regulatory element 1 (SRE-1) (5'-ATCACCCCAC-3'). Has dual sequence specificity binding to both an E-box motif (5'-ATCACGTGA-3') and to SRE-1 (5'-ATCACCCCAC-3'). Regulates transcription of genes related to cholesterol synthesis pathway. The protein is Sterol regulatory element-binding protein 2 (SREBF2) of Cricetulus griseus (Chinese hamster).